Reading from the N-terminus, the 205-residue chain is MSAIAPGMILIAYLCGSISSAILVCRLCGLPDPRTSGSGNPGATNVLRIGGKGAAVAVLIFDVLKGMLPVWGAYELGVSPFWLGLIAIAACLGHIWPVFFGFKGGKGVATAFGAIAPIGWDLTGVMAGTWLLTVLLSGYSSLGAIVSALIAPFYVWWFKPQFTFPVSMLSCLILLRHHDNIQRLWRRQETKIWTKFKRKREKDPE.

Topologically, residues 1 to 3 are periplasmic; sequence MSA. Residues 4–24 form a helical membrane-spanning segment; the sequence is IAPGMILIAYLCGSISSAILV. The Cytoplasmic segment spans residues 25-52; sequence CRLCGLPDPRTSGSGNPGATNVLRIGGK. A helical membrane pass occupies residues 53–73; it reads GAAVAVLIFDVLKGMLPVWGA. At 74–80 the chain is on the periplasmic side; that stretch reads YELGVSP. Residues 81–101 form a helical membrane-spanning segment; it reads FWLGLIAIAACLGHIWPVFFG. Residues 102-111 are Cytoplasmic-facing; it reads FKGGKGVATA. The helical transmembrane segment at 112–132 threads the bilayer; it reads FGAIAPIGWDLTGVMAGTWLL. The Periplasmic segment spans residues 133–137; that stretch reads TVLLS. The chain crosses the membrane as a helical span at residues 138–158; sequence GYSSLGAIVSALIAPFYVWWF. Topologically, residues 159–205 are cytoplasmic; that stretch reads KPQFTFPVSMLSCLILLRHHDNIQRLWRRQETKIWTKFKRKREKDPE.

The protein belongs to the PlsY family. As to quaternary structure, probably interacts with PlsX.

Its subcellular location is the cell inner membrane. The enzyme catalyses sn-glycerol 3-phosphate + an acyl-CoA = a 1-acyl-sn-glycero-3-phosphate + CoA. The catalysed reaction is a fatty acyl-[ACP] + sn-glycerol 3-phosphate = a 1-acyl-sn-glycero-3-phosphate + holo-[ACP]. It functions in the pathway lipid metabolism; phospholipid metabolism. Functionally, catalyzes the transfer of an acyl group from acyl-ACP to glycerol-3-phosphate (G3P) to form lysophosphatidic acid (LPA). This enzyme can also utilize acyl-CoA as fatty acyl donor, but not acyl-PO(4). In Escherichia coli O8 (strain IAI1), this protein is Glycerol-3-phosphate acyltransferase.